A 358-amino-acid chain; its full sequence is MSLRTPPLFDAHTDAGAKLTEFGGWEMPVEFDSIRTEHDAVRESAGKFDISHMGEIEVSGPDAAALTNRLTTNDVASLAPGEATYAGITDDDGVLLDDTVVYRLPDGATYLFVPNAGNDELMAERWRSFADRWDLAATVDNATDDYAMVALQGPDALELLSSLDVDVFDLSRFEAAERTVAGVDCLVSRTGYTGEDGVELLFETAAAETVWSALDCQPCGLGARDTLRLEAGFLLGGNEFDPETNPRTPYEANIGFAVDLGTEFVGSDALAAQREAGPDERLVGLRLQDRGIARHGHDIVAAGDVVGEVTSGTMSPTLGAAIALGYVPVEYTEPGTELAVVVRGDEKDAVVEALPFYE.

It belongs to the GcvT family. The glycine cleavage system is composed of four proteins: P, T, L and H.

It catalyses the reaction N(6)-[(R)-S(8)-aminomethyldihydrolipoyl]-L-lysyl-[protein] + (6S)-5,6,7,8-tetrahydrofolate = N(6)-[(R)-dihydrolipoyl]-L-lysyl-[protein] + (6R)-5,10-methylene-5,6,7,8-tetrahydrofolate + NH4(+). In terms of biological role, the glycine cleavage system catalyzes the degradation of glycine. In Natronomonas pharaonis (strain ATCC 35678 / DSM 2160 / CIP 103997 / JCM 8858 / NBRC 14720 / NCIMB 2260 / Gabara) (Halobacterium pharaonis), this protein is Probable aminomethyltransferase.